The sequence spans 1247 residues: Respiratory nitrate reductase 1 alpha chain (1247 aa).

Residues 43–107 (DKIVRSTHGV…SYSWYLYSAN (65 aa)) form the 4Fe-4S Mo/W bis-MGD-type domain. [4Fe-4S] cluster-binding residues include H50, C54, C58, and C93. D223 provides a ligand contact to Mo-bis(molybdopterin guanine dinucleotide).

The protein belongs to the prokaryotic molybdopterin-containing oxidoreductase family. Dimer of heterotrimers each composed of an alpha, a beta and a gamma chain. Alpha and beta are catalytic chains; gamma chains are involved in binding the enzyme complex to the cytoplasmic membrane. Interacts with the NarJ chaperone. [4Fe-4S] cluster serves as cofactor. Mo-bis(molybdopterin guanine dinucleotide) is required as a cofactor.

The protein resides in the cell membrane. The catalysed reaction is nitrate + a quinol = a quinone + nitrite + H2O. In terms of biological role, the nitrate reductase enzyme complex allows E.coli to use nitrate as an electron acceptor during anaerobic growth. The alpha chain is the actual site of nitrate reduction. The protein is Respiratory nitrate reductase 1 alpha chain (narG) of Escherichia coli (strain K12).